Consider the following 455-residue polypeptide: Anaerobic glycerol-3-phosphate dehydrogenase subunit B (455 aa).

Belongs to the anaerobic G-3-P dehydrogenase subunit B family. In terms of assembly, composed of a catalytic GlpA/B dimer and of membrane bound GlpC. It depends on FMN as a cofactor.

The enzyme catalyses a quinone + sn-glycerol 3-phosphate = dihydroxyacetone phosphate + a quinol. It functions in the pathway polyol metabolism; glycerol degradation via glycerol kinase pathway; glycerone phosphate from sn-glycerol 3-phosphate (anaerobic route): step 1/1. Conversion of glycerol 3-phosphate to dihydroxyacetone. Uses fumarate or nitrate as electron acceptor. The polypeptide is Anaerobic glycerol-3-phosphate dehydrogenase subunit B (Aliivibrio fischeri (strain MJ11) (Vibrio fischeri)).